The sequence spans 406 residues: Phosphopentomutase (406 aa).

Asp-10, Asp-305, His-310, Asp-346, His-347, and His-358 together coordinate Mn(2+).

The protein belongs to the phosphopentomutase family. Mn(2+) is required as a cofactor.

It is found in the cytoplasm. The catalysed reaction is 2-deoxy-alpha-D-ribose 1-phosphate = 2-deoxy-D-ribose 5-phosphate. It catalyses the reaction alpha-D-ribose 1-phosphate = D-ribose 5-phosphate. Its pathway is carbohydrate degradation; 2-deoxy-D-ribose 1-phosphate degradation; D-glyceraldehyde 3-phosphate and acetaldehyde from 2-deoxy-alpha-D-ribose 1-phosphate: step 1/2. Functionally, isomerase that catalyzes the conversion of deoxy-ribose 1-phosphate (dRib-1-P) and ribose 1-phosphate (Rib-1-P) to deoxy-ribose 5-phosphate (dRib-5-P) and ribose 5-phosphate (Rib-5-P), respectively. The sequence is that of Phosphopentomutase from Agrobacterium fabrum (strain C58 / ATCC 33970) (Agrobacterium tumefaciens (strain C58)).